Consider the following 238-residue polypeptide: Small ribosomal subunit protein uS2 (238 aa).

This sequence belongs to the universal ribosomal protein uS2 family.

The sequence is that of Small ribosomal subunit protein uS2 from Actinobacillus pleuropneumoniae serotype 5b (strain L20).